The chain runs to 271 residues: Aquaporin-2 (271 aa).

Topologically, residues 1–11 (MWELRSIAFSR) are cytoplasmic. The helical transmembrane segment at 12 to 32 (AVLAEFLATLLFVFFGLGSAL) threads the bilayer. Topologically, residues 33–40 (QWASSPPS) are extracellular. Residues 41-59 (VLQIAVAFGLGIGILVQAL) traverse the membrane as a helical segment. Topologically, residues 60–64 (GHVSG) are cytoplasmic. The discontinuously helical intramembrane region spans 65–74 (AHINPAVTVA). Residues 68 to 70 (NPA) carry the NPA 1 motif. At 75 to 85 (CLVGCHVSFLR) the chain is on the cytoplasmic side. Residues 86 to 107 (AAFYVAAQLLGAVAGAAILHEI) traverse the membrane as a helical segment. At 108–127 (TPVEIRGDLAVNALHNNATA) the chain is on the extracellular side. N124 carries N-linked (GlcNAc...) asparagine glycosylation. A helical membrane pass occupies residues 128–148 (GQAVTVELFLTMQLVLCIFAS). The Cytoplasmic segment spans residues 149–156 (TDERRGDN). The chain crosses the membrane as a helical span at residues 157-176 (LGSPALSIGFSVTLGHLLGI). At 177 to 180 (YFTG) the chain is on the extracellular side. The discontinuously helical intramembrane region spans 181-193 (CSMNPARSLAPAV). The NPA 2 motif lies at 184–186 (NPA). Over 194 to 201 (VTGKFDDH) the chain is Extracellular. A helical transmembrane segment spans residues 202–222 (WVFWIGPLVGAIIGSLLYNYL). The Cytoplasmic segment spans residues 223-271 (LFPSAKSLQERLAVLKGLEPDTDWEEREVRRRQSVELHSPQSLPRGSKA). The tract at residues 251–271 (VRRRQSVELHSPQSLPRGSKA) is disordered. S256, S261, S264, and S269 each carry phosphoserine. Positions 261 to 271 (SPQSLPRGSKA) are enriched in polar residues.

Belongs to the MIP/aquaporin (TC 1.A.8) family. Homotetramer. Post-translationally, ser-256 phosphorylation is necessary and sufficient for expression at the apical membrane. Endocytosis is not phosphorylation-dependent. N-glycosylated. In terms of tissue distribution, detected in kidney, in cortical and the medullary collecting tubules (at protein level). Detected in kidney medulla and cortex.

The protein resides in the apical cell membrane. Its subcellular location is the basolateral cell membrane. The protein localises to the cell membrane. It localises to the cytoplasmic vesicle membrane. It is found in the golgi apparatus. The protein resides in the trans-Golgi network membrane. It catalyses the reaction H2O(in) = H2O(out). The catalysed reaction is glycerol(in) = glycerol(out). Functionally, forms a water-specific channel that provides the plasma membranes of renal collecting duct with high permeability to water, thereby permitting water to move in the direction of an osmotic gradient. Plays an essential role in renal water homeostasis. Could also be permeable to glycerol. This is Aquaporin-2 from Rattus norvegicus (Rat).